The following is a 357-amino-acid chain: Protein-arginine kinase (357 aa).

In terms of domain architecture, Phosphagen kinase C-terminal spans 24-256 (VIISSRVRLA…LQLVTQERAA (233 aa)). Residues 27–31 (SSRVR), His93, Arg127, 178–182 (RASVM), and 209–214 (RGLYGE) contribute to the ATP site. An RDXXRA motif of the pArg binding pocket involved in allosteric regulation motif is present at residues 339 to 344 (RDIFRA).

This sequence belongs to the ATP:guanido phosphotransferase family.

The enzyme catalyses L-arginyl-[protein] + ATP = N(omega)-phospho-L-arginyl-[protein] + ADP + H(+). Its activity is regulated as follows. Appears to be allosterically activated by the binding of pArg-containing polypeptides to the pArg-binding pocket localized in the C-terminal domain of McsB. Its function is as follows. Catalyzes the specific phosphorylation of arginine residues in proteins. The polypeptide is Protein-arginine kinase (Desulforamulus reducens (strain ATCC BAA-1160 / DSM 100696 / MI-1) (Desulfotomaculum reducens)).